The following is a 168-amino-acid chain: Pleiotrophin (168 aa).

The signal sequence occupies residues 1-32 (MSSQQYQQQRRKFAAAFLALIFILAAVDTAEA). 5 disulfides stabilise this stretch: Cys-47–Cys-76, Cys-55–Cys-85, Cys-62–Cys-89, Cys-99–Cys-131, and Cys-109–Cys-141. Chondroitin sulfate binding stretches follow at residues 92-99 (KKQFGAEC) and 123-131 (KRALHNADC). The segment at 139 to 168 (KPCGKLTKPKPQAESKKKKKEGKKQEKMLD) is disordered. Residues 147–168 (PKPQAESKKKKKEGKKQEKMLD) are chondroitin sulfate A binding.

Belongs to the pleiotrophin family. In terms of assembly, interacts with ALK and NEK6. Interacts with PTPRZ1 (via chondroitin sulfate groups); promotes formation of homooligomers; oligomerization impairs tyrosine phosphatase activity. Forms a complex with PTPRZ1 and CTNNB1; this complex inactivates PTPRZ1 protein tyrosine phosphatase activity through PTN interaction and stimulates tyrosine phosphorylation of CTNNB1. Interacts with ITGB3 and ITGA5. Forms a complex with PTPRZ1 and integrin alpha-V/beta-3 (ITGAV:ITGB3) that stimulates endothelial cell migration through ITGB3 'Tyr-773' phosphorylation. Interacts with SDC3 (via heparan sulfate chains); this interaction mediates the neurite outgrowth-promoting signal from PTN to the cytoskeleton of growing neurites; this interaction mediates osteoblast recruitment. Interacts with GPC2 (via heparan sulfate); this interaction promotes neurite outgrowth through binding of PTN with chondroitin sulfate of proteoglycans, thereby releasing PTPRS of chondroitin sulfate proteoglycans (CSPGs) and leading to binding with heparan sulfate of GPC2. Post-translationally, phosphorylated by NEK6. Osteoblast and brain. Expressed in the follicular epithelium and granulosa cells of the ovary. Strongly expressed in the uterus of newborn mice, and the degree of expression decreased in one-week-old mice, although the expression continues even in the uteri of adult mice. Expression gradually increases from proestrus to estrus, then decreases sharply, and thereafter gradually increased again. strongly expressed in the cochlea of WT mice 1 week after birth, and then the expression decreased and was undetectable by week 8 after birth. Expressed around the cell soma of osteocytes and apparently captured in the unmineralized interstitial matrix surrounding the cells. Furthermore distributed throughout the intraosseous canalicular porosity, being localized in the unmineralized matrix around the cell processes. Strongly expressed in the innermost layer of the periosteum.

It is found in the secreted. Its function is as follows. Secreted growth factor that mediates its signal through cell-surface proteoglycan and non-proteoglycan receptors. Binds cell-surface proteoglycan receptor via their chondroitin sulfate (CS) groups. Thereby regulates many processes like cell proliferation, cell survival, cell growth, cell differentiation and cell migration in several tissues namely neuron and bone. Also plays a role in synaptic plasticity and learning-related behavior by inhibiting long-term synaptic potentiation. Binds PTPRZ1, leading to neutralization of the negative charges of the CS chains of PTPRZ1, inducing PTPRZ1 clustering, thereby causing the dimerization and inactivation of its phosphatase activity leading to increased tyrosine phosphorylation of each of the PTPRZ1 substrates like ALK or AFAP1L2 in order to activate the PI3K-AKT pathway. Through PTPRZ1 binding controls oligodendrocyte precursor cell differentiation by enhancing the phosphorylation of AFAP1L2 in order to activate the PI3K-AKT pathway. Forms a complex with PTPRZ1 and integrin alpha-V/beta-3 (ITGAV:ITGB3) that stimulates endothelial cell migration through SRC dephosphorylation and activation that consequently leads to ITGB3 'Tyr-773' phosphorylation. In adult hippocampus promotes dendritic arborization, spine development, and functional integration and connectivity of newborn granule neurons through ALK by activating AKT signaling pathway. Binds GPC2 and chondroitin sulfate proteoglycans (CSPGs) at the neuron surface, leading to abrogation of binding between PTPRS and CSPGs and neurite outgrowth promotion. Binds SDC3 and mediates bone formation by recruiting and attaching osteoblasts/osteoblast precursors to the sites for new bone deposition. Binds ALK and promotes cell survival and cell proliferation through MAPK pathway activation. Inhibits proliferation and enhances differentiation of neural stem cells by inhibiting FGF2-induced fibroblast growth factor receptor signaling pathway. Mediates regulatory mechanisms in normal hemostasis and in hematopoietic regeneration and in maintaining the balance of myeloid and lymphoid regeneration. In addition may play a role in the female reproductive system, auditory response and the progesterone-induced decidualization pathway. The chain is Pleiotrophin from Mus musculus (Mouse).